The sequence spans 265 residues: Pancreas transcription factor 1 subunit alpha (265 aa).

One can recognise a bHLH domain in the interval 115 to 167; the sequence is QLRQAANVRERRRMQSINDAFEGLRSHIPTLPYEKRLSKVDTLRLAIGYINFL.

It localises to the nucleus. In terms of biological role, transcription factor implicated in the cell fate determination in various organs. Binds to the E-box consensus sequence 5'-CANNTG-3'. Required for exocrine pancreatic development. Plays a central role in directing the differentiation of retinal progenitors towards horizontal and amacrine fates. The sequence is that of Pancreas transcription factor 1 subunit alpha (ptf1a) from Danio rerio (Zebrafish).